A 766-amino-acid polypeptide reads, in one-letter code: Dipeptidyl peptidase 4 (766 aa).

Residues 1 to 6 (MKTPWK) are Cytoplasmic-facing. A helical; Signal-anchor for type II membrane protein transmembrane segment spans residues 7-27 (VLLGLLGIAALVTVITVPVVL). At 28–766 (LNKGTDDAAA…HFLKQCFSLP (739 aa)) the chain is on the extracellular side. N-linked (GlcNAc...) asparagine glycosylation is found at Asn85, Asn92, Asn150, Asn179, Asn219, Asn229, Asn279, and Asn321. 3 disulfide bridges follow: Cys385-Cys394, Cys444-Cys447, and Cys454-Cys472. Residue Ser630 is the Charge relay system of the active site. A disulfide bridge connects residues Cys649 and Cys762. An N-linked (GlcNAc...) asparagine glycan is attached at Asn685. Residues Asp708 and His740 each act as charge relay system in the active site.

The protein belongs to the peptidase S9B family. DPPIV subfamily. In terms of assembly, monomer. Homodimer. Heterodimer with Seprase (FAP). Requires homodimerization for optimal dipeptidyl peptidase activity and T-cell costimulation. Found in a membrane raft complex, at least composed of BCL10, CARD11, DPP4 and IKBKB. Associates with collagen. Interacts with PTPRC; the interaction is enhanced in an interleukin-12-dependent manner in activated lymphocytes. Interacts (via extracellular domain) with ADA; does not inhibit its dipeptidyl peptidase activity. Interacts with CAV1 (via the N-terminus); the interaction is direct. Interacts (via cytoplasmic tail) with CARD11 (via PDZ domain); its homodimerization is necessary for interaction with CARD11. Interacts with IGF2R; the interaction is direct. Interacts with GPC3. In terms of processing, the soluble form (Dipeptidyl peptidase 4 soluble form also named SDPP) derives from the membrane form (Dipeptidyl peptidase 4 membrane form also named MDPP) by proteolytic processing. N- and O-Glycosylated. Post-translationally, phosphorylated. Mannose 6-phosphate residues in the carbohydrate moiety are necessary for interaction with IGF2R in activated T-cells. Mannose 6-phosphorylation is induced during T-cell activation.

The protein resides in the secreted. Its subcellular location is the cell membrane. It is found in the apical cell membrane. It localises to the cell projection. The protein localises to the invadopodium membrane. The protein resides in the lamellipodium membrane. Its subcellular location is the cell junction. It is found in the membrane raft. The catalysed reaction is Release of an N-terminal dipeptide, Xaa-Yaa-|-Zaa-, from a polypeptide, preferentially when Yaa is Pro, provided Zaa is neither Pro nor hydroxyproline.. Its activity is regulated as follows. Inhibited by GPC3 and diprotin A. Functionally, cell surface glycoprotein receptor involved in the costimulatory signal essential for T-cell receptor (TCR)-mediated T-cell activation. Acts as a positive regulator of T-cell coactivation, by binding at least ADA, CAV1, IGF2R, and PTPRC. Its binding to CAV1 and CARD11 induces T-cell proliferation and NF-kappa-B activation in a T-cell receptor/CD3-dependent manner. Its interaction with ADA also regulates lymphocyte-epithelial cell adhesion. In association with FAP is involved in the pericellular proteolysis of the extracellular matrix (ECM), the migration and invasion of endothelial cells into the ECM. May be involved in the promotion of lymphatic endothelial cells adhesion, migration and tube formation. When overexpressed, enhanced cell proliferation, a process inhibited by GPC3. Also acts as a serine exopeptidase with a dipeptidyl peptidase activity that regulates various physiological processes by cleaving peptides in the circulation, including many chemokines, mitogenic growth factors, neuropeptides and peptide hormones such as brain natriuretic peptide 32. Removes N-terminal dipeptides sequentially from polypeptides having unsubstituted N-termini provided that the penultimate residue is proline. In Sus scrofa (Pig), this protein is Dipeptidyl peptidase 4 (DPP4).